A 710-amino-acid chain; its full sequence is PWWP domain-containing DNA repair factor 3A (710 aa).

The interval 106–160 is disordered; it reads QESSAGTGRADRSLRGKPMEHVSSPCDSNSSSLPRGDVLGSSRPHRRRPCVQQSL. Residues 114–125 show a composition bias toward basic and acidic residues; the sequence is RADRSLRGKPME. Over residues 128-137 the composition is skewed to low complexity; that stretch reads SSPCDSNSSS. Residue S161 is modified to Phosphoserine. Disordered stretches follow at residues 177 to 204 and 230 to 398; these read KKGL…ESGS and NGSS…EEPP. Low complexity predominate over residues 288–297; sequence PSACSEPGEC. S374 and S375 each carry phosphoserine. Residues 375 to 385 show a composition bias toward polar residues; that stretch reads SEESMGSNSMR. The PWWP domain maps to 411–472; sequence VGMLVWHKHK…KHFDCKEKQT (62 aa).

Belongs to the PWWP3A family. As to quaternary structure, interacts with TP53BP1 (via BRCT domain); the interaction is not dependent on its phosphorylation status. Binds nucleosomes. Interacts with trimethylated 'Lys-36' of histone H3 (H3K36me3) (in vitro).

The protein resides in the nucleus. In terms of biological role, involved in the DNA damage response pathway by contributing to the maintenance of chromatin architecture. Recruited to the vicinity of DNA breaks by TP53BP1 and plays an accessory role to facilitate damage-induced chromatin changes and promoting chromatin relaxation. Required for efficient DNA repair and cell survival following DNA damage. This chain is PWWP domain-containing DNA repair factor 3A, found in Homo sapiens (Human).